We begin with the raw amino-acid sequence, 131 residues long: Aspartate 1-decarboxylase (131 aa).

The active-site Schiff-base intermediate with substrate; via pyruvic acid is serine 25. A Pyruvic acid (Ser) modification is found at serine 25. Threonine 57 is a binding site for substrate. The Proton donor role is filled by tyrosine 58. Substrate is bound at residue 73–75 (GAA). Residues 112 to 131 (NVPTTQKSENPGQGSLRNAI) form a disordered region. Over residues 113 to 131 (VPTTQKSENPGQGSLRNAI) the composition is skewed to polar residues.

Belongs to the PanD family. Heterooctamer of four alpha and four beta subunits. It depends on pyruvate as a cofactor. Is synthesized initially as an inactive proenzyme, which is activated by self-cleavage at a specific serine bond to produce a beta-subunit with a hydroxyl group at its C-terminus and an alpha-subunit with a pyruvoyl group at its N-terminus.

The protein resides in the cytoplasm. It catalyses the reaction L-aspartate + H(+) = beta-alanine + CO2. The protein operates within cofactor biosynthesis; (R)-pantothenate biosynthesis; beta-alanine from L-aspartate: step 1/1. Its function is as follows. Catalyzes the pyruvoyl-dependent decarboxylation of aspartate to produce beta-alanine. This is Aspartate 1-decarboxylase from Syntrophotalea carbinolica (strain DSM 2380 / NBRC 103641 / GraBd1) (Pelobacter carbinolicus).